Reading from the N-terminus, the 184-residue chain is Putative serine carboxypeptidase-like 52 (184 aa).

The first 22 residues, 1–22 (MRTFSPKLLLLLLLVLRHHAES), serve as a signal peptide directing secretion. N-linked (GlcNAc...) asparagine glycosylation occurs at Asn-93.

This sequence belongs to the peptidase S10 family.

The protein localises to the secreted. This Arabidopsis thaliana (Mouse-ear cress) protein is Putative serine carboxypeptidase-like 52 (SCPL52).